We begin with the raw amino-acid sequence, 166 residues long: Protein E6 (166 aa).

2 zinc fingers span residues 50-86 (CNFC…CRWC) and 123-159 (CQNC…CRLC).

Belongs to the papillomaviridae E6 protein family. As to quaternary structure, forms homodimers. Interacts with ubiquitin-protein ligase UBE3A/E6-AP; this interaction stimulates UBE3A ubiquitin activity. Interacts with host BAK1.

The protein resides in the host cytoplasm. Its subcellular location is the host nucleus. Plays a major role in the induction and maintenance of cellular transformation. E6 associates with host UBE3A/E6-AP ubiquitin-protein ligase and modulates its activity. Protects host keratinocytes from apoptosis by mediating the degradation of host BAK1. May also inhibit host immune response. The chain is Protein E6 from Homo sapiens (Human).